Here is a 211-residue protein sequence, read N- to C-terminus: Histidine biosynthesis bifunctional protein HisIE (211 aa).

Residues 1–122 form a phosphoribosyl-AMP cyclohydrolase region; it reads MSFKTAEVSS…DPQEESQMVW (122 aa). The segment at 123–211 is phosphoribosyl-ATP pyrophosphohydrolase; it reads LHQLEQLLAA…VINKLKERHK (89 aa).

The protein in the N-terminal section; belongs to the PRA-CH family. It in the C-terminal section; belongs to the PRA-PH family.

The protein localises to the cytoplasm. It catalyses the reaction 1-(5-phospho-beta-D-ribosyl)-ATP + H2O = 1-(5-phospho-beta-D-ribosyl)-5'-AMP + diphosphate + H(+). The catalysed reaction is 1-(5-phospho-beta-D-ribosyl)-5'-AMP + H2O = 1-(5-phospho-beta-D-ribosyl)-5-[(5-phospho-beta-D-ribosylamino)methylideneamino]imidazole-4-carboxamide. It participates in amino-acid biosynthesis; L-histidine biosynthesis; L-histidine from 5-phospho-alpha-D-ribose 1-diphosphate: step 2/9. The protein operates within amino-acid biosynthesis; L-histidine biosynthesis; L-histidine from 5-phospho-alpha-D-ribose 1-diphosphate: step 3/9. The sequence is that of Histidine biosynthesis bifunctional protein HisIE from Vibrio vulnificus (strain CMCP6).